The following is a 197-amino-acid chain: Probable low-affinity putrescine importer PlaP (197 aa).

Helical transmembrane passes span 33-53, 85-105, 107-127, 140-160, and 163-183; these read GVLIFSSVTVLASGTAAHAGV, VLLVXAIALLAIKLDLVTATA, INLGALVAFTFVNLSVISQFW, FNYLILPVCGALTVGALWINL, and SSMVLGLIWGGIGLVYXACVT.

The protein belongs to the amino acid-polyamine-organocation (APC) superfamily.

The protein localises to the cell inner membrane. The catalysed reaction is putrescine(in) + H(+)(in) = putrescine(out) + H(+)(out). Its function is as follows. Putrescine importer. The sequence is that of Probable low-affinity putrescine importer PlaP (plaP) from Klebsiella pneumoniae.